The primary structure comprises 339 residues: Holliday junction branch migration complex subunit RuvB (339 aa).

The interval 1–22 is disordered; sequence MIDADPTLRPEPLPEDNDRALR. The interval 1–182 is large ATPase domain (RuvB-L); that stretch reads MIDADPTLRP…FGIPTRLQFY (182 aa). ATP contacts are provided by residues Leu21, Arg22, Gly63, Lys66, Thr67, Thr68, 129–131, Arg172, Tyr182, and Arg219; that span reads EDF. Thr67 is a Mg(2+) binding site. Residues 183 to 253 are small ATPAse domain (RuvB-S); it reads TIDELFEIVS…LADGALTRLG (71 aa). A head domain (RuvB-H) region spans residues 256–339; the sequence is QLGLDGADRR…PPKSQSDLFG (84 aa). DNA is bound by residues Arg292, Arg311, and Arg316.

It belongs to the RuvB family. In terms of assembly, homohexamer. Forms an RuvA(8)-RuvB(12)-Holliday junction (HJ) complex. HJ DNA is sandwiched between 2 RuvA tetramers; dsDNA enters through RuvA and exits via RuvB. An RuvB hexamer assembles on each DNA strand where it exits the tetramer. Each RuvB hexamer is contacted by two RuvA subunits (via domain III) on 2 adjacent RuvB subunits; this complex drives branch migration. In the full resolvosome a probable DNA-RuvA(4)-RuvB(12)-RuvC(2) complex forms which resolves the HJ.

The protein localises to the cytoplasm. It carries out the reaction ATP + H2O = ADP + phosphate + H(+). Its function is as follows. The RuvA-RuvB-RuvC complex processes Holliday junction (HJ) DNA during genetic recombination and DNA repair, while the RuvA-RuvB complex plays an important role in the rescue of blocked DNA replication forks via replication fork reversal (RFR). RuvA specifically binds to HJ cruciform DNA, conferring on it an open structure. The RuvB hexamer acts as an ATP-dependent pump, pulling dsDNA into and through the RuvAB complex. RuvB forms 2 homohexamers on either side of HJ DNA bound by 1 or 2 RuvA tetramers; 4 subunits per hexamer contact DNA at a time. Coordinated motions by a converter formed by DNA-disengaged RuvB subunits stimulates ATP hydrolysis and nucleotide exchange. Immobilization of the converter enables RuvB to convert the ATP-contained energy into a lever motion, pulling 2 nucleotides of DNA out of the RuvA tetramer per ATP hydrolyzed, thus driving DNA branch migration. The RuvB motors rotate together with the DNA substrate, which together with the progressing nucleotide cycle form the mechanistic basis for DNA recombination by continuous HJ branch migration. Branch migration allows RuvC to scan DNA until it finds its consensus sequence, where it cleaves and resolves cruciform DNA. In Ruegeria sp. (strain TM1040) (Silicibacter sp.), this protein is Holliday junction branch migration complex subunit RuvB.